The primary structure comprises 154 residues: CASP-like protein 5B2 (154 aa).

The Cytoplasmic segment spans residues 1–10 (MKKLLGGPGT). The chain crosses the membrane as a helical span at residues 11-31 (VCGLLLRIGQCASAAASIGVM). Over 32-42 (VSAKEFSVHTA) the chain is Extracellular. A helical membrane pass occupies residues 43 to 63 (FCYLIASMGLQLLWSFGLACL). The Cytoplasmic portion of the chain corresponds to 64-77 (DVYALRGKKDLQNP). The helical transmembrane segment at 78–98 (ILVSLFVVGDWVTAMLSLAAA) threads the bilayer. Residues 99–129 (CSSAGVVVLYEKDIKYCNTQSQYPCLRYEVA) lie on the Extracellular side of the membrane. The helical transmembrane segment at 130 to 150 (VALSFVTWIQIAVSSHVTFWI) threads the bilayer. The Cytoplasmic portion of the chain corresponds to 151–154 (LASV).

The protein belongs to the Casparian strip membrane proteins (CASP) family. As to quaternary structure, homodimer and heterodimers. In terms of tissue distribution, expressed in the stele of the root.

Its subcellular location is the cell membrane. The sequence is that of CASP-like protein 5B2 from Arabidopsis thaliana (Mouse-ear cress).